Here is a 122-residue protein sequence, read N- to C-terminus: Small ribosomal subunit protein uS13 (122 aa).

The disordered stretch occupies residues 97–122 (PVRGQRTHTNAKTRKGRSRLPIAGKK).

Belongs to the universal ribosomal protein uS13 family. Part of the 30S ribosomal subunit. Forms a loose heterodimer with protein S19. Forms two bridges to the 50S subunit in the 70S ribosome.

Functionally, located at the top of the head of the 30S subunit, it contacts several helices of the 16S rRNA. In the 70S ribosome it contacts the 23S rRNA (bridge B1a) and protein L5 of the 50S subunit (bridge B1b), connecting the 2 subunits; these bridges are implicated in subunit movement. Contacts the tRNAs in the A and P-sites. This Wolbachia pipientis wMel protein is Small ribosomal subunit protein uS13.